The sequence spans 419 residues: Interferon regulatory factor 3 (419 aa).

Phosphothreonine is present on Thr3. The segment at residues 5 to 111 (KPRILPWLVS…DPHKVYEFVT (107 aa)) is a DNA-binding region (IRF tryptophan pentad repeat). Position 14 is a phosphoserine (Ser14). At Thr75 the chain carries Phosphothreonine. A phosphoserine mark is found at Ser97, Ser123, and Ser135. The interval 140-419 (PKLFDGLILG…DMDFQATGNI (280 aa)) is mediates interaction with ZDHHC11. A Glycyl lysine isopeptide (Lys-Gly) (interchain with G-Cter in ISG15) cross-link involves residue Lys188. Residues 194-353 (EQWEFEVTAF…MWPQDQPWVK (160 aa)) are interaction with HERC5. 3 positions are modified to phosphothreonine: Thr230, Thr237, and Thr246. Residues Lys353 and Lys359 each participate in a glycyl lysine isopeptide (Lys-Gly) (interchain with G-Cter in ISG15) cross-link. Lys359 carries the N6-acetyllysine modification. A Phosphoserine modification is found at Ser378. A Diphosphoserine modification is found at Ser379. At Ser379 the chain carries Phosphoserine; by TBK1. A Phosphoserine; by IKKE modification is found at Ser388. Ser390 carries the phosphoserine modification. Phosphothreonine is present on Thr396.

This sequence belongs to the IRF family. In terms of assembly, monomer. Homodimer; phosphorylation-induced. Interacts (when phosphorylated) with CREBBP. Interacts with MAVS (via phosphorylated pLxIS motif). Interacts with TICAM1 (via phosphorylated pLxIS motif). Interacts with STING1 (via phosphorylated pLxIS motif). Interacts with IKBKE and TBK1. Interacts with TICAM2. Interacts with RBCK1. Interacts with HERC5. Interacts with DDX3X; the interaction allows the phosphorylation and activation of IRF3 by IKBKE. Interacts with TRIM21 and ULK1, in the presence of TRIM21; this interaction leads to IRF3 degradation by autophagy. Interacts with RIOK3; RIOK3 probably mediates the interaction of TBK1 with IRF3. Interacts with ILRUN; the interaction inhibits IRF3 binding to its DNA consensus sequence. Interacts with LYAR; this interaction impairs IRF3 DNA-binding activity. Interacts with TRAF3. Interacts with ZDHHC11; ZDHHC11 recruits IRF3 to STING1 upon DNA virus infection and thereby promotes IRF3 activation. Interacts with HSP90AA1; the interaction mediates IRF3 association with TOMM70. Interacts with BCL2; the interaction decreases upon Sendai virus infection. Interacts with BAX; the interaction is direct, increases upon virus infection and mediates the formation of the apoptosis complex TOMM70:HSP90AA1:IRF3:BAX. Interacts with DDX56. Interacts with NBR1. In terms of processing, constitutively phosphorylated on many Ser/Thr residues. Activated following phosphorylation by TBK1 and IKBKE. Innate adapter proteins, such as MAVS, STING1 or TICAM1, are first activated by viral RNA, cytosolic DNA, and bacterial lipopolysaccharide (LPS), respectively, leading to activation of the kinases TBK1 and IKBKE. These kinases then phosphorylate the adapter proteins on the pLxIS motif, leading to recruitment of IRF3, thereby licensing IRF3 for phosphorylation by TBK1. Phosphorylation at Ser-379 is followed by pyrophosphorylation at the same residue, promoting phosphorylation at Ser-388. Phosphorylated IRF3 dissociates from the adapter proteins, dimerizes, and then enters the nucleus to induce IFNs. Post-translationally, pyrophosphorylated by UAP1 following phosphorylation at Ser-379 by TBK1. Pyrophosphorylation promotes subsequent phosphorylation at Ser-388, leading to homodimerization of IRF3. Acetylation at Lys-359 by KAT8 inhibits recruimtent to promoters and transcription factor activity. Acetylation by KAT8 is promoted by phosphorylation at Ser-388. In terms of processing, ubiquitinated; ubiquitination involves RBCK1 leading to proteasomal degradation. Polyubiquitinated; ubiquitination involves TRIM21 leading to proteasomal degradation. Ubiquitinated by UBE3C, leading to its degradation. Deubiquitinated by USP5 on both 'Lys-48'-linked unanchored and 'Lys-63'-linked anchored polyubiquitin, leading to inhibition of anti-RNA viral innate immunity. Post-translationally, ISGylated by HERC5 resulting in sustained IRF3 activation and in the inhibition of IRF3 ubiquitination by disrupting PIN1 binding. The phosphorylation state of IRF3 does not alter ISGylation. Proteolytically cleaved by apoptotic caspases during apoptosis, leading to its inactivation. Cleavage by CASP3 during virus-induced apoptosis inactivates it, preventing cytokine overproduction.

It is found in the cytoplasm. The protein resides in the nucleus. The protein localises to the mitochondrion. With respect to regulation, in the absence of viral infection, maintained as a monomer in an autoinhibited state. Phosphorylation by TBK1 and IKBKE disrupts this autoinhibition leading to the liberation of the DNA-binding and dimerization activities and its nuclear localization where it can activate type I IFN and ISG genes. Phosphorylation and activation follow the following steps: innate adapter proteins, such as MAVS, STING1 or TICAM1, are first activated by viral RNA, cytosolic DNA and bacterial lipopolysaccharide (LPS), respectively, leading to activation of the kinases TBK1 and IKBKE. These kinases then phosphorylate the adapter proteins on their pLxIS motif, leading to recruitment of IRF3, thereby licensing IRF3 for phosphorylation by TBK1. Phosphorylated IRF3 dissociates from the adapter proteins, dimerizes, and then enters the nucleus to induce IFNs. In terms of biological role, key transcriptional regulator of type I interferon (IFN)-dependent immune responses which plays a critical role in the innate immune response against DNA and RNA viruses. Regulates the transcription of type I IFN genes (IFN-alpha and IFN-beta) and IFN-stimulated genes (ISG) by binding to an interferon-stimulated response element (ISRE) in their promoters. Acts as a more potent activator of the IFN-beta (IFNB) gene than the IFN-alpha (IFNA) gene and plays a critical role in both the early and late phases of the IFNA/B gene induction. Found in an inactive form in the cytoplasm of uninfected cells and following viral infection, double-stranded RNA (dsRNA), or toll-like receptor (TLR) signaling, is phosphorylated by IKBKE and TBK1 kinases. This induces a conformational change, leading to its dimerization and nuclear localization and association with CREB binding protein (CREBBP) to form dsRNA-activated factor 1 (DRAF1), a complex which activates the transcription of the type I IFN and ISG genes. Can activate distinct gene expression programs in macrophages and can induce significant apoptosis in primary macrophages. The polypeptide is Interferon regulatory factor 3 (Irf3) (Mus musculus (Mouse)).